We begin with the raw amino-acid sequence, 714 residues long: Polyribonucleotide nucleotidyltransferase (714 aa).

Mg(2+) is bound by residues aspartate 487 and aspartate 493. Positions 554–613 (PRIEVMTIPVDKIREVIGSGGKVIREIVEKTGAKINIEDDGTIKIASASGKEIEAARKWI) constitute a KH domain. The region spanning 623–691 (GVVYEGTVVK…ERGKVRLSMK (69 aa)) is the S1 motif domain.

This sequence belongs to the polyribonucleotide nucleotidyltransferase family. Mg(2+) serves as cofactor.

Its subcellular location is the cytoplasm. The catalysed reaction is RNA(n+1) + phosphate = RNA(n) + a ribonucleoside 5'-diphosphate. Functionally, involved in mRNA degradation. Catalyzes the phosphorolysis of single-stranded polyribonucleotides processively in the 3'- to 5'-direction. In Allorhizobium ampelinum (strain ATCC BAA-846 / DSM 112012 / S4) (Agrobacterium vitis (strain S4)), this protein is Polyribonucleotide nucleotidyltransferase.